The sequence spans 657 residues: Putative GreA-associated domains protein (657 aa).

The GRAD2 domain occupies 1–152 (MDTRDLTAYS…EQEGNKEKAT (152 aa)). The 505-residue stretch at 153–657 (EFYKKALYRF…TAGSFGTLWE (505 aa)) folds into the GRAD1 domain.

The chain is Putative GreA-associated domains protein from Treponema pallidum (strain Nichols).